Here is a 601-residue protein sequence, read N- to C-terminus: MSLQEILNPSIKTAIHQLFDLTIEKIEFQSTRKEFDGDITMVIFPLLKLIKTPQATPNGAKLNPADLGNKIGNYLVENVAQVEAFNVVSGFLNIVIANDYYINFFNTIKTDAQFGFVSPSEHDKAIMVEYSSPNTNKPLHLGHVRNNLLGYSVAEIIKASGKKVYKTQIINDRGIHICKSMLAWQKFGHSETPETSGLKGDKLVGKYYVAFDKAYKVEIAELMLQGKTEEEAKKQAPIIIEAQQMLLDWEAGKPAVMALWKTMNQWVYDGFATTYKNLGVNFDSYYYESNTYLLGKEVVQIGLDKGVFEKDPDGSVWIDLTQDGLDRKIVLRSDGTAVYMTQDIGTAIQRVKDFSDVGGMVYTVGNEQDYHFRVLFLILKKLGFDWASSLYHLSYGMVELPSGKMKSREGTVVDADDLMEEMTSTAQKLSEDLGKLESYSEEEKAILYKTIGLGALKYYILKVDPKKSMMFNPEESVDFAGNTGPFIQYTYARIQSILRKANFDITVTISTKLHPKEKELIKQIEMYPEVIQHAAANHSPALIANYIYDLVKEYNSFYQTVSILGEEDNDKKVFRVQLSKKVADTIKTAFTLLGIDVPERM.

The short motif at 133-143 (PNTNKPLHLGH) is the 'HIGH' region element.

This sequence belongs to the class-I aminoacyl-tRNA synthetase family. As to quaternary structure, monomer.

The protein resides in the cytoplasm. It catalyses the reaction tRNA(Arg) + L-arginine + ATP = L-arginyl-tRNA(Arg) + AMP + diphosphate. This chain is Arginine--tRNA ligase, found in Flavobacterium psychrophilum (strain ATCC 49511 / DSM 21280 / CIP 103535 / JIP02/86).